Here is a 379-residue protein sequence, read N- to C-terminus: Alcohol dehydrogenase class-3 (379 aa).

Residues Cys-47, His-69, Cys-99, Cys-102, Cys-105, Cys-113, and Cys-176 each coordinate Zn(2+).

It belongs to the zinc-containing alcohol dehydrogenase family. Class-III subfamily. As to quaternary structure, homodimer. The cofactor is Zn(2+).

The protein resides in the cytoplasm. It catalyses the reaction a primary alcohol + NAD(+) = an aldehyde + NADH + H(+). It carries out the reaction a secondary alcohol + NAD(+) = a ketone + NADH + H(+). The catalysed reaction is S-(hydroxymethyl)glutathione + NADP(+) = S-formylglutathione + NADPH + H(+). The enzyme catalyses S-(hydroxymethyl)glutathione + NAD(+) = S-formylglutathione + NADH + H(+). Class-III ADH is remarkably ineffective in oxidizing ethanol, but it readily catalyzes the oxidation of long-chain primary alcohols and the oxidation of S-(hydroxymethyl) glutathione. This Dictyostelium discoideum (Social amoeba) protein is Alcohol dehydrogenase class-3 (adh5).